The sequence spans 118 residues: U-scoloptoxin(05)-Cw1a (118 aa).

The signal sequence occupies residues Met-1–Ala-22.

Belongs to the scoloptoxin-05 family. In terms of processing, contains 5 disulfide bonds. In terms of tissue distribution, expressed by the venom gland.

Its subcellular location is the secreted. The chain is U-scoloptoxin(05)-Cw1a from Cormocephalus westwoodi (Westwood's green centipede).